Consider the following 314-residue polypeptide: Mitochondrial thiamine pyrophosphate carrier 1 (314 aa).

6 helical membrane-spanning segments follow: residues 14–30 (VAAW…GLLA), 84–100 (LLYV…YSLF), 116–136 (LVVG…FDVL), 170–186 (GSIA…SIMF), 217–233 (SAGT…TFPL), and 285–302 (GILV…VSFW). Solcar repeat units lie at residues 14 to 103 (VAAW…FNRY), 110 to 195 (EARL…IRIY), and 210 to 310 (ELAT…AIHY).

This sequence belongs to the mitochondrial carrier (TC 2.A.29) family.

It localises to the mitochondrion inner membrane. Mitochondrial transporter that mediates uptake of thiamine pyrophosphate (ThPP) into mitochondria. In Saccharomyces cerevisiae (strain ATCC 204508 / S288c) (Baker's yeast), this protein is Mitochondrial thiamine pyrophosphate carrier 1 (TPC1).